A 71-amino-acid polypeptide reads, in one-letter code: Large ribosomal subunit protein bL31 (71 aa).

Zn(2+)-binding residues include Cys-16, Cys-18, Cys-37, and Cys-40.

It belongs to the bacterial ribosomal protein bL31 family. Type A subfamily. Part of the 50S ribosomal subunit. Requires Zn(2+) as cofactor.

Binds the 23S rRNA. The polypeptide is Large ribosomal subunit protein bL31 (Pseudomonas putida (strain W619)).